We begin with the raw amino-acid sequence, 124 residues long: Small ribosomal subunit protein uS12 (124 aa).

A disordered region spans residues 1 to 25 (MPTINQLIRKPRKSQKEKTASPALQ). A 3-methylthioaspartic acid modification is found at D89.

The protein belongs to the universal ribosomal protein uS12 family. In terms of assembly, part of the 30S ribosomal subunit. Contacts proteins S8 and S17. May interact with IF1 in the 30S initiation complex.

Functionally, with S4 and S5 plays an important role in translational accuracy. Its function is as follows. Interacts with and stabilizes bases of the 16S rRNA that are involved in tRNA selection in the A site and with the mRNA backbone. Located at the interface of the 30S and 50S subunits, it traverses the body of the 30S subunit contacting proteins on the other side and probably holding the rRNA structure together. The combined cluster of proteins S8, S12 and S17 appears to hold together the shoulder and platform of the 30S subunit. In Borrelia duttonii (strain Ly), this protein is Small ribosomal subunit protein uS12.